Consider the following 293-residue polypeptide: Dioxygenase cdmA (293 aa).

Positions 135, 137, and 212 each coordinate Fe cation.

It belongs to the PhyH family. Homodimer. Fe cation is required as a cofactor.

It catalyses the reaction chrodrimanin C + 2-oxoglutarate + O2 = verruculide A + succinate + CO2 + H2O. The catalysed reaction is chrodrimanin H + 2-oxoglutarate + O2 = chrodrimanin E + succinate + CO2 + H2O. It participates in secondary metabolite biosynthesis; terpenoid biosynthesis. Its function is as follows. Dioxygenase; part of the gene cluster that mediates the biosynthesis of chrodrimanin B, a meroterpenoid that acts as a potent blocker of insect GABA-gated chloride channels. The first step of the pathway is the biosynthesis of 6-hydroxymellein by the polyketide synthase cdmE. The prenyltransferase cdmH acts as a 6-hydroxymellein 5-farnesyltransferase and produces the hydrophobic metabolite verruculide C. The FAD-dependent monooxygenase cdmI further converts verruculide C into verruculide B. The terpene cyclase cdmG then produced the pentacyclic molecule 3-hydroxypentacecilide A, the backbone structure of chrodrimanin B, via folding the farnesyl moiety of the substrate into the chair-boat conformation. The short-chain dehydrogenase/reductase cdmF functions as the 3-OH dehydrogenase that oxidizes the C-3 hydroxyl group of 3-hydroxypentacecilide A and produces chrodrimanin C, the dehydrogenated product of 3-hydroxypentacecilide A. The cytochrome P450 monooxygenase cdmJ then accepts both 3-hydroxypentacecilide A and chrodrimanin C and functions as a C-7-beta-hydroxylase to produce respectively chrodrimanin H and chrodrimanin F. The dioxygenase cdmA accepts chrodrimanin H to afford chrodrimanin E, which is further transformed to chrodrimanin A by the dioxygenase cdmD. CdmA can also accept chrodrimanin C as substrate to convert it into verruculide A, which is further converted into chrodrimanin T by cdmD. The last step of the biosynthesis is proposed to be performed by the acetyltransferase cdmC which acetylates chrodrimanin A to yield chrodrimanin B. The pathway may also lead to the production of additional shunt products, including chrodrimanins T and U. This Talaromyces verruculosus (Penicillium verruculosum) protein is Dioxygenase cdmA.